Here is a 162-residue protein sequence, read N- to C-terminus: Interleukin-15 (162 aa).

A signal peptide spans 1–29 (MRISKPHLRSISIQCYLCLLLNSHFLTEA). Residues 30–48 (GIHVFILGCFSAGLPKTEA) constitute a propeptide that is removed on maturation. 2 disulfide bridges follow: Cys83–Cys133 and Cys90–Cys136. Residue Asn127 is glycosylated (N-linked (GlcNAc...) asparagine).

Belongs to the IL-15/IL-21 family. In terms of tissue distribution, most abundant in placenta and skeletal muscle. It is also detected in the heart, lung, liver and kidney. IL15-S21AA is preferentially expressed in tissues such as testis and thymus.

It localises to the secreted. It is found in the cytoplasm. Its subcellular location is the nucleus. In terms of biological role, cytokine that plays a major role in the development of inflammatory and protective immune responses to microbial invaders and parasites by modulating immune cells of both the innate and adaptive immune systems. Stimulates the proliferation of natural killer cells, T-cells and B-cells and promotes the secretion of several cytokines. In monocytes, induces the production of IL8 and monocyte chemotactic protein 1/CCL2, two chemokines that attract neutrophils and monocytes respectively to sites of infection. Unlike most cytokines, which are secreted in soluble form, IL15 is expressed in association with its high affinity IL15RA on the surface of IL15-producing cells and delivers signals to target cells that express IL2RB and IL2RG receptor subunits. Binding to its receptor triggers the phosphorylation of JAK1 and JAK3 and the recruitment and subsequent phosphorylation of signal transducer and activator of transcription-3/STAT3 and STAT5. In mast cells, induces the rapid tyrosine phosphorylation of STAT6 and thereby controls mast cell survival and release of cytokines such as IL4. In Homo sapiens (Human), this protein is Interleukin-15 (IL15).